Consider the following 436-residue polypeptide: Glutamyl-tRNA reductase (436 aa).

Substrate is bound by residues 49–52 (TCNR), Ser109, 114–116 (EGQ), and Gln120. The active-site Nucleophile is Cys50. Position 198 to 203 (198 to 203 (GAGRMS)) interacts with NADP(+).

This sequence belongs to the glutamyl-tRNA reductase family. As to quaternary structure, homodimer.

It catalyses the reaction (S)-4-amino-5-oxopentanoate + tRNA(Glu) + NADP(+) = L-glutamyl-tRNA(Glu) + NADPH + H(+). It participates in porphyrin-containing compound metabolism; protoporphyrin-IX biosynthesis; 5-aminolevulinate from L-glutamyl-tRNA(Glu): step 1/2. Its pathway is porphyrin-containing compound metabolism; chlorophyll biosynthesis. Its function is as follows. Catalyzes the NADPH-dependent reduction of glutamyl-tRNA(Glu) to glutamate 1-semialdehyde (GSA). This Prochlorococcus marinus (strain AS9601) protein is Glutamyl-tRNA reductase.